We begin with the raw amino-acid sequence, 278 residues long: Dermonecrotic toxin LspiSicTox-betaIE2i (278 aa).

Residue histidine 5 is part of the active site. Mg(2+) contacts are provided by glutamate 25 and aspartate 27. Histidine 41 acts as the Nucleophile in catalysis. 2 disulfide bridges follow: cysteine 45–cysteine 51 and cysteine 47–cysteine 190. A Mg(2+)-binding site is contributed by glutamate 85.

Belongs to the arthropod phospholipase D family. Class II subfamily. The cofactor is Mg(2+). As to expression, expressed by the venom gland.

The protein localises to the secreted. It carries out the reaction an N-(acyl)-sphingosylphosphocholine = an N-(acyl)-sphingosyl-1,3-cyclic phosphate + choline. It catalyses the reaction an N-(acyl)-sphingosylphosphoethanolamine = an N-(acyl)-sphingosyl-1,3-cyclic phosphate + ethanolamine. The catalysed reaction is a 1-acyl-sn-glycero-3-phosphocholine = a 1-acyl-sn-glycero-2,3-cyclic phosphate + choline. The enzyme catalyses a 1-acyl-sn-glycero-3-phosphoethanolamine = a 1-acyl-sn-glycero-2,3-cyclic phosphate + ethanolamine. In terms of biological role, dermonecrotic toxins cleave the phosphodiester linkage between the phosphate and headgroup of certain phospholipids (sphingolipid and lysolipid substrates), forming an alcohol (often choline) and a cyclic phosphate. This toxin acts on sphingomyelin (SM). It may also act on ceramide phosphoethanolamine (CPE), lysophosphatidylcholine (LPC) and lysophosphatidylethanolamine (LPE), but not on lysophosphatidylserine (LPS), and lysophosphatidylglycerol (LPG). It acts by transphosphatidylation, releasing exclusively cyclic phosphate products as second products. Induces dermonecrosis, hemolysis, increased vascular permeability, edema, inflammatory response, and platelet aggregation. The polypeptide is Dermonecrotic toxin LspiSicTox-betaIE2i (Loxosceles spinulosa (Recluse spider)).